A 128-amino-acid chain; its full sequence is MLGVLLVLHGSKIPEWKDVGIKYAEYLSRYFNLVEFGFLEFNKPTLSEALSNLLAKGANKIVVVPLLFATGTHFKRDIPRLLGIDGDEKKIQYMGKEIEIIIADPLGFDEKIGEVLVKRVNETYNKNY.

The active-site Proton acceptor is His9. His9 lines the Co(2+) pocket. Residues Lys43 and 68 to 73 (FATGTH) each bind substrate. His73 is a binding site for Co(2+).

This sequence belongs to the CbiX family. CbiXS subfamily. As to quaternary structure, homotetramer; dimer of dimers.

The enzyme catalyses Co-sirohydrochlorin + 2 H(+) = sirohydrochlorin + Co(2+). It participates in cofactor biosynthesis; adenosylcobalamin biosynthesis; cob(II)yrinate a,c-diamide from sirohydrochlorin (anaerobic route): step 1/10. Its function is as follows. Catalyzes the insertion of Co(2+) into sirohydrochlorin as part of the anaerobic pathway to cobalamin biosynthesis. This chain is Sirohydrochlorin cobaltochelatase, found in Saccharolobus islandicus (strain Y.N.15.51 / Yellowstone #2) (Sulfolobus islandicus).